The following is a 95-amino-acid chain: Acylphosphatase 2 (95 aa).

The Acylphosphatase-like domain maps to 6–93 (RVIVTVQGRV…PLPPGFEVRP (88 aa)). Catalysis depends on residues R21 and N39.

The protein belongs to the acylphosphatase family.

The catalysed reaction is an acyl phosphate + H2O = a carboxylate + phosphate + H(+). The protein is Acylphosphatase 2 (acyP2) of Ralstonia nicotianae (strain ATCC BAA-1114 / GMI1000) (Ralstonia solanacearum).